A 414-amino-acid polypeptide reads, in one-letter code: DNA polymerase IV 1 (414 aa).

In terms of domain architecture, UmuC spans 8–189 (IFHIDMNSFY…LPVGEMHGVG (182 aa)). D12 and D108 together coordinate Mg(2+). E109 is a catalytic residue. Residues 391 to 414 (LKKEESKTKGTSFNKDFFQDEKKS) form a disordered region.

It belongs to the DNA polymerase type-Y family. In terms of assembly, monomer. Mg(2+) is required as a cofactor.

The protein resides in the cytoplasm. The enzyme catalyses DNA(n) + a 2'-deoxyribonucleoside 5'-triphosphate = DNA(n+1) + diphosphate. In terms of biological role, poorly processive, error-prone DNA polymerase involved in untargeted mutagenesis. Copies undamaged DNA at stalled replication forks, which arise in vivo from mismatched or misaligned primer ends. These misaligned primers can be extended by PolIV. Exhibits no 3'-5' exonuclease (proofreading) activity. May be involved in translesion synthesis (TSL), in conjunction with the beta clamp from PolIII. In Bacillus subtilis (strain 168), this protein is DNA polymerase IV 1 (dinB1).